The chain runs to 555 residues: Transcription factor kojR (555 aa).

The segment at residues 21-47 (CETCKLRKRKCDGHEPCTYCLRYEYQC) is a DNA-binding region (zn(2)-C6 fungal-type). A disordered region spans residues 51–73 (PHPRRKPAASKSSARPSEEEDSP).

It localises to the nucleus. Functionally, transcription factor that regulates the gene cluster that mediates the biosynthesis of 5-hydroxy-2-hydroxymethyl-1,4-pyrone, also know as kojic acid, a by-product in the fermentation process of malting rice that acts as a chelation agent. Mediates the expression of kojA and kojT via binding of an 11-nucleotide palindromic sequence, 5'-CGRCTWAGYCG-3' (R=A/G, W=A/T, Y=C/T) within the target gene promoters. The sequence is that of Transcription factor kojR from Aspergillus flavus (strain ATCC 200026 / FGSC A1120 / IAM 13836 / NRRL 3357 / JCM 12722 / SRRC 167).